Here is a 126-residue protein sequence, read N- to C-terminus: Large ribosomal subunit protein eL32 (126 aa).

The protein belongs to the eukaryotic ribosomal protein eL32 family.

The sequence is that of Large ribosomal subunit protein eL32 from Thermococcus onnurineus (strain NA1).